We begin with the raw amino-acid sequence, 500 residues long: uncharacterized protein (500 aa).

Positions 1 to 20 (MHSIIFKAAVALLGVSTAAG) are cleaved as a signal peptide. The N-linked (GlcNAc...) asparagine glycan is linked to asparagine 43. The region spanning 60-232 (TALRPDCIIA…TAFTVKTHTQ (173 aa)) is the FAD-binding PCMH-type domain. Histidine 98 carries the post-translational modification Pros-8alpha-FAD histidine. N-linked (GlcNAc...) asparagine glycans are attached at residues asparagine 194, asparagine 201, asparagine 246, asparagine 299, and asparagine 414.

This sequence belongs to the oxygen-dependent FAD-linked oxidoreductase family. The cofactor is FAD.

It localises to the secreted. This is an uncharacterized protein from Arthroderma benhamiae (strain ATCC MYA-4681 / CBS 112371) (Trichophyton mentagrophytes).